Here is a 398-residue protein sequence, read N- to C-terminus: Bone morphogenetic protein 2-B (398 aa).

The signal sequence occupies residues 1–23; the sequence is MVAGIHSLLLLQFYQILLSGCTG. Residues 24–284 constitute a propeptide that is removed on maturation; it reads LVPEEGKRKY…GHALHKRQKR (261 aa). 4 N-linked (GlcNAc...) asparagine glycosylation sites follow: Asn-137, Asn-202, Asn-237, and Asn-340. Intrachain disulfides connect Cys-298–Cys-363, Cys-327–Cys-395, and Cys-331–Cys-397.

This sequence belongs to the TGF-beta family. In terms of assembly, homodimer; disulfide-linked.

It is found in the secreted. Functionally, induces cartilage and bone formation. The chain is Bone morphogenetic protein 2-B (bmp2-b) from Xenopus laevis (African clawed frog).